The primary structure comprises 243 residues: Uridylate kinase (243 aa).

An ATP-binding site is contributed by Lys-15–Gly-18. Residue Gly-57 participates in UMP binding. Gly-58 and Arg-62 together coordinate ATP. Residues Asp-77 and Thr-138–Thr-145 each bind UMP. Thr-165, Asn-166, Tyr-171, and Asp-174 together coordinate ATP.

This sequence belongs to the UMP kinase family. Homohexamer.

The protein localises to the cytoplasm. It catalyses the reaction UMP + ATP = UDP + ADP. Its pathway is pyrimidine metabolism; CTP biosynthesis via de novo pathway; UDP from UMP (UMPK route): step 1/1. With respect to regulation, inhibited by UTP. Functionally, catalyzes the reversible phosphorylation of UMP to UDP. The sequence is that of Uridylate kinase from Coxiella burnetii (strain RSA 493 / Nine Mile phase I).